Consider the following 342-residue polypeptide: Dihydroorotase (342 aa).

Residues histidine 13 and histidine 15 each coordinate Zn(2+). Residues 15–17 and asparagine 41 each bind substrate; that span reads HLR. Zn(2+) is bound by residues lysine 98, histidine 135, and histidine 173. Residue lysine 98 is modified to N6-carboxylysine. Histidine 135 contributes to the substrate binding site. Residue leucine 218 coordinates substrate. Aspartate 246 is a binding site for Zn(2+). Aspartate 246 is an active-site residue. Histidine 250 and alanine 262 together coordinate substrate.

The protein belongs to the metallo-dependent hydrolases superfamily. DHOase family. Class II DHOase subfamily. In terms of assembly, homodimer. Requires Zn(2+) as cofactor.

The catalysed reaction is (S)-dihydroorotate + H2O = N-carbamoyl-L-aspartate + H(+). It functions in the pathway pyrimidine metabolism; UMP biosynthesis via de novo pathway; (S)-dihydroorotate from bicarbonate: step 3/3. In terms of biological role, catalyzes the reversible cyclization of carbamoyl aspartate to dihydroorotate. The polypeptide is Dihydroorotase (Vibrio atlanticus (strain LGP32) (Vibrio splendidus (strain Mel32))).